We begin with the raw amino-acid sequence, 695 residues long: uncharacterized protein (695 aa).

At S113 the chain carries Phosphoserine. 12 helical membrane-spanning segments follow: residues 237–257, 265–285, 313–333, 344–364, 380–400, 408–428, 457–477, 488–508, 531–551, 565–585, 604–624, and 633–653; these read FPLI…SLTV, LAAV…FEGI, IAFS…SEPL, INLT…YIFF, GIYV…TLVW, FIGA…LLLF, AFSG…LTLF, AQSA…AIGI, QVGL…LVFG, VIKL…FDSL, IVNL…LSWF, and WIGI…YVLF. Positions 673–688 are enriched in acidic residues; it reads EVDSDEYLTDSDDPDE. Residues 673–695 form a disordered region; sequence EVDSDEYLTDSDDPDENTALLGA.

Belongs to the multi antimicrobial extrusion (MATE) (TC 2.A.66.1) family.

The protein localises to the membrane. This is an uncharacterized protein from Saccharomyces cerevisiae (strain ATCC 204508 / S288c) (Baker's yeast).